A 336-amino-acid polypeptide reads, in one-letter code: Eukaryotic translation initiation factor 3 subunit I (336 aa).

6 WD repeats span residues 8–49, 50–91, 93–135, 144–183, 187–226, and 285–324; these read GHER…GTYN, GHNG…KAWE, PTAI…GPQP, PIGS…EVAS, NHIG…VIKS, and GGFG…FRAK.

This sequence belongs to the eIF-3 subunit I family. As to quaternary structure, component of the eukaryotic translation initiation factor 3 (eIF-3) complex.

The protein localises to the cytoplasm. Its function is as follows. Component of the eukaryotic translation initiation factor 3 (eIF-3) complex, which is involved in protein synthesis of a specialized repertoire of mRNAs and, together with other initiation factors, stimulates binding of mRNA and methionyl-tRNAi to the 40S ribosome. The eIF-3 complex specifically targets and initiates translation of a subset of mRNAs involved in cell proliferation. The polypeptide is Eukaryotic translation initiation factor 3 subunit I (Puccinia graminis f. sp. tritici (strain CRL 75-36-700-3 / race SCCL) (Black stem rust fungus)).